The sequence spans 1492 residues: MAAEREAGRLLCTSSSRRCCPPPPLLLLLPLLLLLGRPASGAAATKSGSPPQSAGASVRTFTPFYFLVEPVDTLSVRGSSVILNCSAYSEPSPNIEWKKDGTFLNLESDDRRQLLPDGSLFISNVVHSKHNKPDEGFYQCVATVDNLGTIVSRTAKLTVAGLPRFTSQPEPSSVYVGNSAILNCEVNADLVPFVRWEQNRQPLLLDDRIVKLPSGTLVISNATEGDGGLYRCIVESGGPPKFSDEAELKVLQDPEEIVDLVFLMRPSSMMKVTGQSAVLPCVVSGLPAPVVRWMKNEEVLDTESSGRLVLLAGGCLEISDVTEDDAGTYFCIADNGNKTVEAQAELTVQVPPGFLKQPANIYAHESMDIVFECEVTGKPTPTVKWVKNGDVVIPSDYFKIVKEHNLQVLGLVKSDEGFYQCIAENDVGNAQAGAQLIILEHDVAIPTLPPTSLTSATTDHLAPATTGPLPSAPRDVVASLVSTRFIKLTWRTPASDPHGDNLTYSVFYTKEGVARERVENTSQPGEMQVTIQNLMPATVYIFKVMAQNKHGSGESSAPLRVETQPEVQLPGPAPNIRAYATSPTSITVTWETPLSGNGEIQNYKLYYMEKGTDKEQDIDVSSHSYTINGLKKYTEYSFRVVAYNKHGPGVSTQDVAVRTLSDVPSAAPQNLSLEVRNSKSIVIHWQPPSSTTQNGQITGYKIRYRKASRKSDVTETLVTGTQLSQLIEGLDRGTEYNFRVAALTVNGTGPATDWLSAETFESDLDETRVPEVPSSLHVRPLVTSIVVSWTPPENQNIVVRGYAIGYGIGSPHAQTIKVDYKQRYYTIENLDPSSHYVITLKAFNNVGEGIPLYESAVTRPHTDTSEVDLFVINAPYTPVPDPTPMMPPVGVQASILSHDTIRITWADNSLPKHQKITDSRYYTVRWKTNIPANTKYKNANATTLSYLVTGLKPNTLYEFSVMVTKGRRSSTWSMTAHGATFELVPTSPPKDVTVVSKEGKPRTIIVNWQPPSEANGKITGYIIYYSTDVNAEIHDWVIEPVVGNRLTHQIQELTLDTPYYFKIQARNSKGMGPMSEAVQFRTPKADSSDKMPNDQALGSAGKGSRLPDLGSDYKPPMSGSNSPHGSPTSPLDSNMLLVIIVSVGVITIVVVVVIAVFCTRRTTSHQKKKRAACKSVNGSHKYKGNCKDVKPPDLWIHHERLELKPIDKSPDPNPVMTDTPIPRNSQDITPVDNSMDSNIHQRRNSYRGHESEDSMSTLAGRRGMRPKMMMPFDSQPPQPVISAHPIHSLDNPHHHFHSSSLASPARSHLYHPSSPWPIGTSMSLSDRANSTESVRNTPSTDTMPASSSQTCCTDHQDPEGATSSSYLASSQEEDSGQSLPTAHVRPSHPLKSFAVPAIPPPGPPLYDPALPSTPLLSQQALNHHIHSVKTASIGTLGRSRPPMPVVVPSAPEVQETTRMLEDSESSYEPDELTKEMAHLEGLMKDLNAITTA.

A signal peptide spans 1–36 (MAAEREAGRLLCTSSSRRCCPPPPLLLLLPLLLLLG). The Extracellular portion of the chain corresponds to 37–1136 (RPASGAAATK…PTSPLDSNML (1100 aa)). Ig-like C2-type domains lie at 63-158 (PFYF…AKLT), 163-249 (PRFT…AELK), 254-347 (PEEI…AELT), and 352-437 (PGFL…AQLI). N-linked (GlcNAc...) asparagine glycosylation is present at N84. Intrachain disulfides connect C85–C140, C184–C232, and C281–C331. Residue N221 is glycosylated (N-linked (GlcNAc...) asparagine). An N-linked (GlcNAc...) asparagine glycan is attached at N337. A disulfide bridge connects residues C373 and C421. 6 Fibronectin type-III domains span residues 472 to 566 (APRD…TQPE), 572 to 662 (PAPN…TLSD), 667 to 762 (APQN…TFES), 772 to 862 (VPSS…RPHT), 887 to 986 (PPVG…LVPT), and 988 to 1085 (PPKD…TPKA). N501 and N520 each carry an N-linked (GlcNAc...) asparagine glycan. N-linked (GlcNAc...) asparagine glycans are attached at residues N670 and N746. The N-linked (GlcNAc...) asparagine glycan is linked to N940. Residues 1072–1128 (GPMSEAVQFRTPKADSSDKMPNDQALGSAGKGSRLPDLGSDYKPPMSGSNSPHGSPT) are disordered. Over residues 1083-1092 (PKADSSDKMP) the composition is skewed to basic and acidic residues. Residues 1118–1128 (SGSNSPHGSPT) are compositionally biased toward polar residues. A helical membrane pass occupies residues 1137-1157 (LVIIVSVGVITIVVVVVIAVF). The Cytoplasmic portion of the chain corresponds to 1158–1492 (CTRRTTSHQK…MKDLNAITTA (335 aa)). 3 disordered regions span residues 1205-1237 (PIDKSPDPNPVMTDTPIPRNSQDITPVDNSMDS), 1266-1300 (PKMMMPFDSQPPQPVISAHPIHSLDNPHHHFHSSS), and 1321-1396 (SMSL…FAVP). A phosphoserine mark is found at S1209 and S1225. The span at 1222-1237 (PRNSQDITPVDNSMDS) shows a compositional bias: polar residues. T1229 carries the phosphothreonine modification. Composition is skewed to polar residues over residues 1321 to 1353 (SMSLSDRANSTESVRNTPSTDTMPASSSQTCCT) and 1361 to 1380 (ATSSSYLASSQEEDSGQSLP). The residue at position 1432 (S1432) is a Phosphoserine. Phosphothreonine is present on T1435. Residues S1463, S1465, and S1466 each carry the phosphoserine modification.

The protein belongs to the immunoglobulin superfamily. DCC family. In terms of assembly, interacts with BMP2, BMP4, BMP6, and BMP7. Interacts with RGMA and RGMB. Interacts with MYO10. As to expression, widely expressed.

It is found in the cell membrane. Its function is as follows. Multi-functional cell surface receptor regulating cell adhesion in many diverse developmental processes, including neural tube and mammary gland formation, myogenesis and angiogenesis. Receptor for members of the BMP, netrin, and repulsive guidance molecule (RGM) families. Netrin-Neogenin interactions result in a chemoattractive axon guidance response and cell-cell adhesion, the interaction between NEO1/Neogenin and RGMa and RGMb induces a chemorepulsive response. This Mus musculus (Mouse) protein is Neogenin.